The following is a 420-amino-acid chain: UDP-glucuronic acid decarboxylase 1 (420 aa).

Met-1 bears the N-acetylmethionine mark. Over Met-1–Lys-19 the chain is Cytoplasmic. The chain crosses the membrane as a helical; Signal-anchor for type II membrane protein span at residues Leu-20–Met-40. The Lumenal segment spans residues Arg-41–Ser-420. Thr-94 bears the Phosphothreonine mark. Positions 98, 99, 100, 119, 120, 122, 123, 124, 144, and 145 each coordinate NAD(+). 2 residues coordinate UDP-alpha-D-glucuronate: Leu-149 and Tyr-150. NAD(+)-binding residues include Leu-159 and Ser-161. A UDP-alpha-D-glucuronate-binding site is contributed by Lys-177. Thr-178 contacts NAD(+). Asn-185, Gly-188, Lys-191, and Arg-192 together coordinate UDP-alpha-D-glucuronate. NAD(+) contacts are provided by Ala-200, Tyr-231, and Lys-235. The Proton acceptor role is filled by Tyr-231. Positions 245, 248, and 249 each coordinate UDP-alpha-D-glucuronate. Residues Thr-261, His-267, and Arg-272 each contribute to the NAD(+) site. N-linked (GlcNAc...) asparagine glycosylation is present at Asn-316.

It belongs to the NAD(P)-dependent epimerase/dehydratase family. UDP-glucuronic acid decarboxylase subfamily. In terms of assembly, homodimer and homotetramer. Interacts with AKT1. It depends on NAD(+) as a cofactor.

It localises to the golgi apparatus. The protein resides in the golgi stack membrane. It catalyses the reaction UDP-alpha-D-glucuronate + H(+) = UDP-alpha-D-xylose + CO2. Its pathway is nucleotide-sugar biosynthesis; UDP-alpha-D-xylose biosynthesis; UDP-alpha-D-xylose from UDP-alpha-D-glucuronate: step 1/1. Functionally, catalyzes the NAD-dependent decarboxylation of UDP-glucuronic acid to UDP-xylose. Necessary for the biosynthesis of the core tetrasaccharide in glycosaminoglycan biosynthesis. This is UDP-glucuronic acid decarboxylase 1 from Homo sapiens (Human).